Here is a 499-residue protein sequence, read N- to C-terminus: Maturase K (499 aa).

Belongs to the intron maturase 2 family. MatK subfamily.

It is found in the plastid. Its subcellular location is the chloroplast. Its function is as follows. Usually encoded in the trnK tRNA gene intron. Probably assists in splicing its own and other chloroplast group II introns. The chain is Maturase K from Ceratozamia mexicana (Mexican horncone).